Reading from the N-terminus, the 482-residue chain is Adenylosuccinate lyase (482 aa).

Residues 14–15, 82–84, and 108–109 each bind substrate; these read RY, RHD, and TS. His156 functions as the Proton donor/acceptor in the catalytic mechanism. A Glycyl lysine isopeptide (Lys-Gly) (interchain with G-Cter in ubiquitin) cross-link involves residue Lys196. Gln238 serves as a coordination point for substrate. Ser286 acts as the Proton donor/acceptor in catalysis. The substrate site is built by Arg300, Arg326, Ser331, and Arg335.

The protein belongs to the lyase 1 family. Adenylosuccinate lyase subfamily. In terms of assembly, homotetramer. Residues from neighboring subunits contribute catalytic and substrate-binding residues to each active site.

The enzyme catalyses N(6)-(1,2-dicarboxyethyl)-AMP = fumarate + AMP. It carries out the reaction (2S)-2-[5-amino-1-(5-phospho-beta-D-ribosyl)imidazole-4-carboxamido]succinate = 5-amino-1-(5-phospho-beta-D-ribosyl)imidazole-4-carboxamide + fumarate. It participates in purine metabolism; AMP biosynthesis via de novo pathway; AMP from IMP: step 2/2. The protein operates within purine metabolism; IMP biosynthesis via de novo pathway; 5-amino-1-(5-phospho-D-ribosyl)imidazole-4-carboxamide from 5-amino-1-(5-phospho-D-ribosyl)imidazole-4-carboxylate: step 2/2. This chain is Adenylosuccinate lyase (ADE13), found in Saccharomyces cerevisiae (strain ATCC 204508 / S288c) (Baker's yeast).